A 397-amino-acid polypeptide reads, in one-letter code: MAKEKFERSKPHVNIGTIGHVDHGKTTLTAAITTILGHKGFAKAFKYDEIDKAPEEKERGITISTSHVEYETENRHYAHVDCPGHADYVKNMITGAAQMDGAILVVSAADGPMPQTREHILLASRVGVEHIVVFLNKADQVDDAELIELVEMEVRELMNEYGFPGDDAPVVVGSALKALENPEDDAATQCIMDLMAAVDEYIPTPERATDKPFLMPVEDIFTITGRGTVATGRVERGILKVGDEIEIVGLSDESKKSVITGIEMFRKLLDEAQAGDNIGALLRGVQRDEIQRGQVLAATGSVKPHKSFTGQVYVLKKEEGGRHTPFFNGYRPQFYFRTTDVTGSIALPEGVEMVMPGDHIDMKVELITRVAMDEGLRFAIREGGRTVGSGVVSEITE.

The 197-residue stretch at 10 to 206 folds into the tr-type G domain; the sequence is KPHVNIGTIG…AVDEYIPTPE (197 aa). Positions 19 to 26 are G1; that stretch reads GHVDHGKT. A GTP-binding site is contributed by 19–26; sequence GHVDHGKT. Mg(2+) is bound at residue Thr-26. The interval 60-64 is G2; it reads GITIS. A G3 region spans residues 81–84; it reads DCPG. GTP-binding positions include 81-85 and 136-139; these read DCPGH and NKAD. Residues 136-139 are G4; the sequence is NKAD. The segment at 174-176 is G5; the sequence is SAL.

The protein belongs to the TRAFAC class translation factor GTPase superfamily. Classic translation factor GTPase family. EF-Tu/EF-1A subfamily. As to quaternary structure, monomer.

It is found in the cytoplasm. It carries out the reaction GTP + H2O = GDP + phosphate + H(+). In terms of biological role, GTP hydrolase that promotes the GTP-dependent binding of aminoacyl-tRNA to the A-site of ribosomes during protein biosynthesis. The sequence is that of Elongation factor Tu from Clostridium tetani (strain Massachusetts / E88).